A 1887-amino-acid polypeptide reads, in one-letter code: ATP-dependent DNA helicase tlh1 (1887 aa).

Basic and acidic residues predominate over residues 329-347 (NQQRREQQDKGENKKRQDD). Disordered stretches follow at residues 329 to 372 (NQQR…EEEE), 504 to 552 (ERKE…NTDD), and 1110 to 1135 (MVEG…EMTQ). 2 stretches are compositionally biased toward acidic residues: residues 360 to 372 (LEDD…EEEE) and 524 to 533 (SAEDDNDNDN). The segment covering 540–549 (NNNNNNNNTN) has biased composition (low complexity). A compositionally biased stretch (basic and acidic residues) spans 1112-1131 (EGDKEKDKTNEEKNKDEVKA). The 176-residue stretch at 1200-1375 (YFSLLNRMNL…RQTFCTNFYV (176 aa)) folds into the Helicase ATP-binding domain. ATP is bound by residues 1213–1220 (LPTGGGKS) and 1240–1247 (MNMVTLVL). Residues 1322 to 1325 (DEAH) carry the DEAH box motif. Positions 1401–1559 (DLRTLMKRTK…CVRSFLASEM (159 aa)) constitute a Helicase C-terminal domain. The tract at residues 1613–1643 (YNASFSSSPPPQPGNSSGMSAMNTNTTSTTP) is disordered. Residues 1626-1642 (GNSSGMSAMNTNTTSTT) show a composition bias toward low complexity. A CCHC-type zinc finger spans residues 1804-1821 (STCYKCGKADHNLRECKL).

The protein belongs to the helicase family. RecQ subfamily.

The catalysed reaction is Couples ATP hydrolysis with the unwinding of duplex DNA by translocating in the 3'-5' direction.. The enzyme catalyses ATP + H2O = ADP + phosphate + H(+). Functionally, a probable ATP-dependent 3'-5' DNA helicase. Has a role in telomerase-independent telomere maintenance. The polypeptide is ATP-dependent DNA helicase tlh1 (Schizosaccharomyces pombe (strain 972 / ATCC 24843) (Fission yeast)).